A 37-amino-acid polypeptide reads, in one-letter code: Photosystem II reaction center protein M (37 aa).

The chain crosses the membrane as a helical span at residues 5–25 (ILAFIATALFILVPTAFLLII).

The protein belongs to the PsbM family. In terms of assembly, PSII is composed of 1 copy each of membrane proteins PsbA, PsbB, PsbC, PsbD, PsbE, PsbF, PsbH, PsbI, PsbJ, PsbK, PsbL, PsbM, PsbT, PsbX, PsbY, PsbZ, Psb30/Ycf12, at least 3 peripheral proteins of the oxygen-evolving complex and a large number of cofactors. It forms dimeric complexes.

It is found in the plastid. The protein localises to the chloroplast thylakoid membrane. In terms of biological role, one of the components of the core complex of photosystem II (PSII). PSII is a light-driven water:plastoquinone oxidoreductase that uses light energy to abstract electrons from H(2)O, generating O(2) and a proton gradient subsequently used for ATP formation. It consists of a core antenna complex that captures photons, and an electron transfer chain that converts photonic excitation into a charge separation. This subunit is found at the monomer-monomer interface. The protein is Photosystem II reaction center protein M of Pelargonium hortorum (Common geranium).